The following is a 309-amino-acid chain: Pyridoxal kinase (309 aa).

Position 2 is an N-acetylthreonine; in Pyridoxal kinase, N-terminally processed (Thr-2). Pyridoxal-binding residues include Ser-23 and Thr-58. Thr-58 contributes to the pyridoxal 5'-phosphate binding site. ATP is bound at residue Asp-124. Asp-124 is a Na(+) binding site. Asp-129 contacts Mg(2+). Thr-155 provides a ligand contact to Na(+). ATP is bound by residues 157 to 160, 193 to 194, 225 to 227, and Thr-232; these read NQFE, TS, and IPA. Thr-193 provides a ligand contact to Na(+). Residue 233–234 coordinates pyridoxal 5'-phosphate; it reads GD. Asp-234 serves as the catalytic Proton acceptor.

It belongs to the pyridoxine kinase family. Homodimer. The cofactor is Zn(2+). Expressed ubiquitously in leaves, stems, roots, flowers and siliques. Present in root hairs and other tip-growing cells such as papillar cells on the top of stigma.

The enzyme catalyses pyridoxal + ATP = pyridoxal 5'-phosphate + ADP + H(+). It functions in the pathway cofactor metabolism; pyridoxal 5'-phosphate salvage; pyridoxal 5'-phosphate from pyridoxal: step 1/1. Its function is as follows. Catalyzes the transfer of a phosphate group from ATP to the 5-hydroxylmethyl group of pyridoxal to form the biologically active pyridoxal phosphate, an active form of vitamin B6. Required for Na(+) and K(+) homeostasis and for salt tolerance. Involved in root hair development, both for initiation and tip growth. The chain is Pyridoxal kinase from Arabidopsis thaliana (Mouse-ear cress).